We begin with the raw amino-acid sequence, 232 residues long: UPF0758 protein EF_2926 (232 aa).

Positions 107–229 constitute an MPN domain; it reads KVTSSQQVAQ…YISLREENFF (123 aa). The Zn(2+) site is built by histidine 178, histidine 180, and aspartate 191. The JAMM motif signature appears at 178 to 191; that stretch reads HNHPSGNPTPSPQD.

This sequence belongs to the UPF0758 family.

This Enterococcus faecalis (strain ATCC 700802 / V583) protein is UPF0758 protein EF_2926.